The following is a 454-amino-acid chain: uncharacterized protein (454 aa).

Residue 125–132 participates in ATP binding; sequence GDVGCGKT.

It belongs to the AFG1 ATPase family.

This is an uncharacterized protein from Schizosaccharomyces pombe (strain 972 / ATCC 24843) (Fission yeast).